The following is a 355-amino-acid chain: Guanine nucleotide-binding protein G(z) subunit alpha (355 aa).

A compositionally biased stretch (basic and acidic residues) spans 1-14 (MGCRQSSEEKEAAR). Positions 1–26 (MGCRQSSEEKEAARRSRRIDRHLRSE) are disordered. Gly-2 carries N-myristoyl glycine lipidation. Cys-3 is lipidated: S-palmitoyl cysteine. In terms of domain architecture, G-alpha spans 32-355 (REIKLLLLGT…QNNLKYIGLC (324 aa)). Positions 35-48 (KLLLLGTSNSGKST) are G1 motif. GTP is bound by residues 40 to 47 (GTSNSGKS), 176 to 182 (LRSRDMT), 201 to 205 (DVGGQ), 270 to 273 (NKKD), and Ala-327. Mg(2+) is bound at residue Ser-47. Positions 174 to 182 (DILRSRDMT) are G2 motif. Arg-179 bears the ADP-ribosylarginine; by cholera toxin mark. Thr-182 lines the Mg(2+) pocket. Positions 197 to 206 (FKMVDVGGQR) are G3 motif. A G4 motif region spans residues 266 to 273 (ILFLNKKD). Residues 325–330 (TCATDT) form a G5 motif region.

It belongs to the G-alpha family. G(i/o/t/z) subfamily. As to quaternary structure, G-proteins are composed of 3 units; alpha, beta and gamma. The alpha chain contains the guanine nucleotide binding site. Interacts with ADGRB2.

Its subcellular location is the membrane. Guanine nucleotide-binding proteins (G proteins) are involved as modulators or transducers in various transmembrane signaling systems. In Homo sapiens (Human), this protein is Guanine nucleotide-binding protein G(z) subunit alpha (GNAZ).